We begin with the raw amino-acid sequence, 1147 residues long: Protein lin-41 (1147 aa).

The tract at residues 1–93 (MATIVPCSLE…PPSMIQSPQQ (93 aa)) is disordered. The span at 33–47 (SGNELSMGGSSSEGD) shows a compositional bias: low complexity. Positions 48–65 (SMSHHRGEHSPNHHHQDN) are enriched in basic and acidic residues. Low complexity predominate over residues 84 to 93 (PPSMIQSPQQ). The RING-type zinc finger occupies 114 to 155 (CSVCSKSSTIGVLPFVCAHKTCQSCYQMTPSSYDRRACKLCG). Residues 366-412 (MGPIQCQGCESKISFAYCMQCQEALCIHCVQAHQRVRATKQHAFVEL) form a B box-type; atypical zinc finger. Positions 371, 374, 394, and 398 each coordinate Zn(2+). Positions 565-618 (AFDTHVNALEERRKELLKRVETVKNLKLSVLISQAESLQSKQIDLQQAIQTATK) form a coiled coil. A Filamin repeat occupies 723–817 (ACGDLLSSSI…ISGCPTTMDI (95 aa)). 6 NHL repeats span residues 832–875 (ILTF…FDKD), 879–922 (ISKF…FDEN), 926–969 (LLKF…FTPQ), 974–1017 (RKCG…LSPR), 1022–1065 (MKVY…FASD), and 1107–1147 (SAPT…IRVF). Residues 1104–1123 (AFSSAPTPLTPSPRQLLDRP) form a disordered region.

It belongs to the TRIM/RBCC family.

It localises to the cytoplasm. The protein localises to the P-body. Heterochronic protein which acts downstream of let-7 in temporal patterning. Plays a role in the developmental timing of postembryonic hypodermal seam cell division and fusion events and adult alae production. Represses lin-29 during late larval stages, which prevents terminal differentiation of hypodermal seam cells and promotes their division. Involved in post-transcriptional gene regulation, uses two independent pathways. Has direct and specific RNA-binding activity and, depending on the location (5'UTR or 3'UTR) of the target site, triggers either mRNA decay or repression of translation. Degrades the mRNA of transcription factor dmd-3 to govern the timing and extent of male tail tip morphogenesis. Plays a role in the sexual maturation of the nervous system. The protein is Protein lin-41 of Caenorhabditis elegans.